Consider the following 300-residue polypeptide: B1 kinase (300 aa).

Residues W16 to F282 enclose the Protein kinase domain. Residues I22–I30 and K45 each bind ATP. D147 functions as the Proton acceptor in the catalytic mechanism.

Belongs to the protein kinase superfamily. Ser/Thr protein kinase family. Poxviruses subfamily. In terms of assembly, interacts with host JIP1; this interaction increases the amount of MAPK bound to JIP1 and subsequently increases the activity of transcription factors, such as JUN, that respond to these complexes. Interacts with protein OPG198; this interaction inhibits the repressive activity of OPG198 pseudokinase on viral replication factory formation. Requires Mg(2+) as cofactor. Post-translationally, autophosphorylated.

The protein localises to the virion. It is found in the host cytoplasm. The catalysed reaction is L-seryl-[protein] + ATP = O-phospho-L-seryl-[protein] + ADP + H(+). The enzyme catalyses L-threonyl-[protein] + ATP = O-phospho-L-threonyl-[protein] + ADP + H(+). Functionally, essential serine/threonine-protein kinase that plays different role in the viral life cycle. Phosphorylates the host small ribosomal protein RACK1 thereby customizing the ribosomes to a state optimal for viral mRNAs (which contain poly-A leaders) but not for host mRNAs. Facilitates viral DNA replication by inhibiting host BANF1, a cellular host defense responsive to foreign DNA. Phosphorylates host BANF1 on serine and threonine residues; this leads to BANF1 relocalization to the cytoplasm, loss of dimerization and impaired DNA binding activity. Indeed, BANF1 activity depends on its DNA-binding property which is blocked by VPK1-mediated phosphorylation. Required for viral intermediate genes expression, probably by inhibiting host BANF1. Modulates cellular responses via host JUN by two different mechanisms, either by direct phosphorylation or by modulation of upstream JIP1-MAPK complexes. Seems to participate in the accumulation/processing of late proteins and thus in virion maturation. In addition, inhibits B12 repressive activity on viral DNA replication via a phosphorylation-dependent mechanism. The sequence is that of B1 kinase (OPG187) from Bos taurus (Bovine).